A 1003-amino-acid polypeptide reads, in one-letter code: NACHT, LRR and PYD domains-containing protein 9B (1003 aa).

In terms of domain architecture, Pyrin spans 1–91 (MAGSSGYGLL…SIMAQKKKRH (91 aa)). The region spanning 143–465 (VTAIVAGTTG…QDKDICVPVI (323 aa)) is the NACHT domain. 149 to 156 (GTTGEGKT) lines the ATP pocket. LRR repeat units follow at residues 749–770 (KVKHLSLVENPLKNKGVMSLCE), 778–799 (VLQSLMLSYCCLTFIACGHLYE), 806–826 (HLSLLDLGSNFLEDTGVNLLC), 835–856 (TLKELWLPGCFLTSQCCEEISA), 863–883 (NLKTLKLGNNNIQDTGVRQLC), 892–913 (NLECLGLDLCEFTSDCCKDLAL), and 920–940 (TLNSLNLDWKTLDHSGLVVLC).

As to quaternary structure, sensor component of NLRP9 inflammasomes. Inflammasomes are supramolecular complexes that assemble in the cytosol in response to pathogens, such as rotavirus, but not encephalomyocarditis virus (EMCV), and play critical roles in innate immunity and inflammation. The core of NLRP9 inflammasomes consists of a signal sensor component (NLRP9), an adapter (ASC/PYCARD), which recruits an effector pro-inflammatory caspase (CASP1). Within the complex, NLRP9 and PYCARD interact via their respective DAPIN/pyrin domains. This interaction initiates speck formation (nucleation) which greatly enhances further addition of soluble PYCARD molecules to the speck in a prion-like polymerization process. Clustered PYCARD nucleates the formation of CASP1 filaments through the interaction of their respective CARD domains, acting as a platform for CASP1 polymerization. CASP1 filament formation increases local enzyme concentration, resulting in trans-autocleavage and activation. Active CASP1 then processes IL1B and IL18 precursors, leading to the release of mature cytokines in the extracellular milieu and inflammatory response. Interacts with DHX9 upon rotavirus infection; this interaction may trigger inflammasome activation and inflammatory response. In terms of tissue distribution, predominantly expressed in the intestine, including proximal and distal colon, cecum, ileum, jejunum and duodenum (at protein level). In the ileum, expressed in epithelial cells. Also expressed in oocytes at all follicular stages and in preimplantation embryos (at protein level). Although expression decreases in preimplantation embryos, it is still detectable in blastocyts.

The protein resides in the cytoplasm. It localises to the inflammasome. Its function is as follows. As the sensor component of the NLRP9 inflammasome, plays a crucial role in innate immunity and inflammation. In response to pathogens, including rotavirus, initiates the formation of the inflammasome polymeric complex, made of NLRP9, PYCARD and CASP1. Recruitment of proCASP1 to the inflammasome promotes its activation and CASP1-catalyzed IL1B and IL18 maturation and release in the extracellular milieu. The active cytokines stimulate inflammatory responses. Inflammasomes can also induce pyroptosis, an inflammatory form of programmed cell death. NLRP9 inflammasome activation may be initiated by DHX9 interaction with viral double-stranded RNA (dsRNA), preferentially to short dsRNA segments. In Mus musculus (Mouse), this protein is NACHT, LRR and PYD domains-containing protein 9B (Nlrp9b).